The sequence spans 688 residues: Collagen alpha-2(IX) chain (688 aa).

The first 22 residues, 1–22 (MAPAADPRSLLVLLQVLGLALA), serve as a signal peptide directing secretion. Residues 26–162 (GLPGEPGPPG…PGKPGRPGTI (137 aa)) are triple-helical region 4 (COL4). 3 disordered regions span residues 26–520 (GLPG…RDAS), 549–578 (GATGMMGPPGPPGPPGYPGKQGPHGHPGPR), and 590–662 (IGNT…LPGF). 2 stretches are compositionally biased toward pro residues: residues 30 to 42 (EPGPPGPPGPPGV) and 105 to 126 (LPGPPGLPGPGFAGPPGPPGPV). Positions 128–138 (LPGEIGLTGPK) are enriched in low complexity. Residues 143–156 (PEGPSGPPGPPGKP) show a composition bias toward pro residues. Residue proline 159 is modified to 4-hydroxyproline. The segment at 163 to 179 (QGLEGSADFLCPTNCPA) is nonhelical region 4 (NC4). Serine 168 is a glycosylation site (O-linked (Xyl...) (glycosaminoglycan) serine). The interval 180–518 (GVKGPPGLQG…PGRQGVAGRD (339 aa)) is triple-helical region 3 (COL3). At lysine 182 the chain carries 5-hydroxylysine. Lysine 182 is a glycosylation site (O-linked (Gal...) hydroxylysine). Composition is skewed to low complexity over residues 251 to 265 (KGMVGSVGAAGSPGE) and 394 to 412 (PVGQPGPQGRQGPKGEQGP). Gly residues predominate over residues 435–444 (GPRGGVGDPG). Positions 497–506 (RGLVGDRGLP) are enriched in low complexity. Residues 519–548 (ASDQHIEDVVLKMLQEQLAEMAVSAKREAL) are nonhelical region 3 (NC3). The triple-helical region 2 (COL2) stretch occupies residues 549–631 (GATGMMGPPG…PGLPGRPGQA (83 aa)). Residues 556–565 (PPGPPGPPGY) are compositionally biased toward pro residues. Positions 598–610 (KRGEKGDQGEVGR) are enriched in basic and acidic residues. Residues 632–633 (IN) form a nonhelical region 2 (NC2) region. A triple-helical region 1 (COL1) region spans residues 634 to 663 (GKDGDRGAPGAPGEAGRPGLPGPIGLPGFC). Over residues 641 to 651 (APGAPGEAGRP) the composition is skewed to low complexity. Residues 664–688 (EPAACLGASAYASGRLTEPGSIKGP) form a nonhelical region 1 (NC1) region.

The protein belongs to the fibril-associated collagens with interrupted helices (FACIT) family. In terms of assembly, heterotrimer of an alpha 1(IX), an alpha 2(IX) and an alpha 3(IX) chain. The chains are linked to each other by interchain disulfide bonds. Trimers are also cross-linked via hydroxylysines. In terms of processing, prolines at the third position of the tripeptide repeating unit (G-X-Y) are hydroxylated in some or all of the chains. Post-translationally, covalently linked to the telopeptides of type II collagen by hydroxylysine-derived cross-links.

The protein localises to the secreted. It is found in the extracellular space. Its subcellular location is the extracellular matrix. Structural component of hyaline cartilage and vitreous of the eye. This is Collagen alpha-2(IX) chain from Bos taurus (Bovine).